Reading from the N-terminus, the 128-residue chain is Iron-sulfur cluster insertion protein ErpA (128 aa).

Residues C56, C120, and C122 each contribute to the iron-sulfur cluster site.

The protein belongs to the HesB/IscA family. Homodimer. Iron-sulfur cluster is required as a cofactor.

Its function is as follows. Required for insertion of 4Fe-4S clusters for at least IspG. The sequence is that of Iron-sulfur cluster insertion protein ErpA from Xylella fastidiosa (strain M12).